A 492-amino-acid polypeptide reads, in one-letter code: Glutamyl-tRNA(Gln) amidotransferase subunit A (492 aa).

Residues Lys-78 and Ser-158 each act as charge relay system in the active site. The Acyl-ester intermediate role is filled by Ser-182.

The protein belongs to the amidase family. GatA subfamily. Heterotrimer of A, B and C subunits.

It catalyses the reaction L-glutamyl-tRNA(Gln) + L-glutamine + ATP + H2O = L-glutaminyl-tRNA(Gln) + L-glutamate + ADP + phosphate + H(+). Allows the formation of correctly charged Gln-tRNA(Gln) through the transamidation of misacylated Glu-tRNA(Gln) in organisms which lack glutaminyl-tRNA synthetase. The reaction takes place in the presence of glutamine and ATP through an activated gamma-phospho-Glu-tRNA(Gln). The chain is Glutamyl-tRNA(Gln) amidotransferase subunit A from Rhodopseudomonas palustris (strain BisB5).